The chain runs to 966 residues: MANKMEKMASIDAQLRQLVPAKVSEDDKLIEYDALLLDRFLDILQDLHGEDLKDSVQEVYELSAEYERKHDPKKLEELGNLITSFDAGDSIVVAKSFSHMLNLANLAEEVQIAHRRRNKLKKGDFRDESNATTESDIEETLKKLVFDMKKSPQEVFDALKNQTVDLVLTAHPTQSVRRSLLQKHGRVRNCLSQLYAKDITPDDKQELDEALQREIQAAFRTDEIKRTPPTPQDEMRAGMSYFHETIWKGVPKFLRRVDTALKNIGINERVPYNAPLIQFSSWMGGDRDGNPRVTPEVTRDVCLLARMMAANLYYSQIEDLMFELSMWRCNDELRVRAEELHRNSKKDEVAKHYIEFWKKIPLNEPYRVVLGEVRDKLYRTRERSRYLLAHGYCEIPEEATFTNVDEFLEPLELCYRSLCACGDRAIADGSLLDFLRQVSTFGLSLVRLDIRQESDRHTDVMDAITKHLEIGSYQEWSEEKRQEWLLSELIGKRPLFGPDLPQTDEIRDVLDTFRVIAELPSDNFGAYIISMATAPSDVLAVELLQRECKVRNPLRVVPLFEKLDDLESAPAALARLFSIDWYINRIDGKQEVMIGYSDSGKDAGRFSAAWQLYKAQEDLIKVAQKFGVKLTMFHGRGGTVGRGGGPTHLAILSQPPETIHGSLRVTVQGEVIEQSFGEEHLCFRTLQRFTAATLEHGMRPPSSPKPEWRALMDQMAVIATEEYRSIVFKEPRFVEYFRLATPEMEYGRMNIGSRPAKRRPSGGIETLRAIPWIFAWTQTRFHLPVWLGFGAAFRQVVQKDVKNLHMLQEMYNQWPFFRVTIDLVEMVFAKGDPGIAALNDRLLVSKDLWPFGEQLRSKYEETKKLLLQVAAHKEVLEGDPYLKQRLRLRDSYITTLNVFQAYTLKRIRDPNYKVEVRPPISKESAETSKPADELVTLNPTSEYAPGLEDTLILTMKGIAAGMQNTG.

Ser-10 is modified (phosphoserine). Active-site residues include His-171 and Lys-601.

This sequence belongs to the PEPCase type 1 family. Homotetramer. The cofactor is Mg(2+).

It localises to the cytoplasm. The enzyme catalyses oxaloacetate + phosphate = phosphoenolpyruvate + hydrogencarbonate. By light-reversible phosphorylation. Through the carboxylation of phosphoenolpyruvate (PEP) it forms oxaloacetate, a four-carbon dicarboxylic acid source for the tricarboxylic acid cycle. This Medicago sativa (Alfalfa) protein is Phosphoenolpyruvate carboxylase (PEPC).